A 238-amino-acid chain; its full sequence is Purine nucleoside phosphorylase DeoD-type (238 aa).

Residue His-5 coordinates a purine D-ribonucleoside. Residues Gly-21, Arg-25, Arg-44, and 88 to 91 (RIGS) contribute to the phosphate site. Residues 180–182 (EME) and 204–205 (SD) each bind a purine D-ribonucleoside. The active-site Proton donor is Asp-205.

The protein belongs to the PNP/UDP phosphorylase family. In terms of assembly, homohexamer; trimer of homodimers.

The catalysed reaction is a purine D-ribonucleoside + phosphate = a purine nucleobase + alpha-D-ribose 1-phosphate. It catalyses the reaction a purine 2'-deoxy-D-ribonucleoside + phosphate = a purine nucleobase + 2-deoxy-alpha-D-ribose 1-phosphate. In terms of biological role, catalyzes the reversible phosphorolytic breakdown of the N-glycosidic bond in the beta-(deoxy)ribonucleoside molecules, with the formation of the corresponding free purine bases and pentose-1-phosphate. In Xenorhabdus nematophila (strain ATCC 19061 / DSM 3370 / CCUG 14189 / LMG 1036 / NCIMB 9965 / AN6), this protein is Purine nucleoside phosphorylase DeoD-type.